The primary structure comprises 853 residues: MCCEKWNHVAEMLLFIEDREEEYKILCLCSRAFVEDRKLYNLGLKGYYVKSSGNNAGDQGTEEEEDGHSNGTAESHSPNESDLDSEAKLMRSMGLPIQFGRMSSHENFEMSMNARNKAKVKQKRRKHQKRYLDEMVRESWRNDYEEDDLVVSDDPSSVEHCENNRTCEIQSKAGSEVENLPVENTLAPKLEVPENWEKYWNEYGEGLLWQSWQEKYPDQTLSSEPWNLPDTKEEWEQHYSQLYWYYLEQFQYWEAQGWTFTASQNCDKDVYTSHTEVDQNAESSLKADVMTFSSSPNIVEDEIPGSNDNDHNEIITAINNITVSAEKVEQSQLDSSQHCDEPLSEITGKECPASGGSDSCNGTPKENDISENRSSDQPAKELQESSGTNKGKHRPHHNGADGHESDDDPPEHKPSKVKRSHELDVDENPDSEVDDNGFLLGFKHGSGQKYGGIPNFSHRQVRYLEKNVKYKSKYLDLRKQMPVKSKHILFTEDSGKPFVVCKSKVRSKVEKFLKWVNERVDEETSQDSLSQNKMQDTCTSSDSEEQDMSLEKADNLMETRDPEPEKCQIISSATELEAEKSEVGSLVATVPENCSTEEIPNSPHAETEVEIKKKKKKNKNKKINDLPPEIASVPELAKYWAQRYRLFSRFDDGIKLDKEGWFSVTPEKIAEHIAGRVSQAFRCDVVVDAFCGVGGNTIQFALTGKRVIAIDIDPVKIDLARNNAEVYGIADKIEFICGDFLLLAPCLKADVVFLSPPWGGPDYATAETFDIRTMMSPDGFEIFRLSQKITNNIVYFLPRNADIDQVASLAGLGGQVEIEQNFLNNKLKTITAYFGDLIRRPALLKTSTSEAEV.

The interval 54–84 (NNAGDQGTEEEEDGHSNGTAESHSPNESDLD) is disordered. T61 carries the post-translational modification Phosphothreonine. Positions 69–80 (SNGTAESHSPNE) are enriched in polar residues. S81, S85, S92, and S139 each carry phosphoserine. Y144 carries the phosphotyrosine modification. Residue S152 is modified to Phosphoserine. Disordered stretches follow at residues 328 to 437 (VEQS…DDNG) and 523 to 549 (ETSQ…QDMS). A compositionally biased stretch (basic and acidic residues) spans 365-383 (KENDISENRSSDQPAKELQ). A phosphoserine mark is found at S405 and S431. Positions 424–435 (DVDENPDSEVDD) are enriched in acidic residues. Residues 526-541 (QDSLSQNKMQDTCTSS) show a composition bias toward polar residues. S572 is subject to Phosphoserine. The interval 594–623 (CSTEEIPNSPHAETEVEIKKKKKKNKNKKI) is disordered. A compositionally biased stretch (basic residues) spans 612–621 (KKKKKKNKNK). D711 is a binding site for S-adenosyl-L-methionine.

This sequence belongs to the methyltransferase superfamily. Trimethylguanosine synthase family. May form homooligomers. Interacts with CREBBP/CBP, EED/WAIT1, EP300/P300, NCOA6/PRIP, PPARBP/PBP and SMN. In terms of tissue distribution, ubiquitously expressed.

Its subcellular location is the cytoplasm. It localises to the nucleus. It is found in the cajal body. The protein localises to the nucleolus. The catalysed reaction is a 5'-end (N(7)-methyl 5'-triphosphoguanosine)-ribonucleoside in snRNA + S-adenosyl-L-methionine = a 5'-end (N(2),N(7)-dimethyl 5'-triphosphoguanosine)-ribonucleoside in snRNA + S-adenosyl-L-homocysteine + H(+). It carries out the reaction a 5'-end (N(7)-methyl 5'-triphosphoguanosine)-ribonucleoside in snoRNA + S-adenosyl-L-methionine = a 5'-end (N(2),N(7)-dimethyl 5'-triphosphoguanosine)-ribonucleoside in snoRNA + S-adenosyl-L-homocysteine + H(+). It catalyses the reaction a 5'-end (N(2),N(7)-dimethyl 5'-triphosphoguanosine)-ribonucleoside in snRNA + S-adenosyl-L-methionine = a 5'-end (N(2),N(2),N(7)-trimethyl 5'-triphosphoguanosine)-ribonucleoside in snRNA + S-adenosyl-L-homocysteine + H(+). The enzyme catalyses a 5'-end (N(2),N(7)-dimethyl 5'-triphosphoguanosine)-ribonucleoside in snoRNA + S-adenosyl-L-methionine = a 5'-end (N(2),N(2),N(7)-trimethyl 5'-triphosphoguanosine)-ribonucleoside in snoRNA + S-adenosyl-L-homocysteine + H(+). Its function is as follows. Catalyzes the 2 serial methylation steps for the conversion of the 7-monomethylguanosine (m(7)G) caps of snRNAs and snoRNAs to a 2,2,7-trimethylguanosine (m(2,2,7)G) cap structure. The enzyme is specific for guanine, and N7 methylation must precede N2 methylation. Hypermethylation of the m7G cap of U snRNAs leads to their concentration in nuclear foci, their colocalization with coilin and the formation of canonical Cajal bodies (CBs). Plays a role in transcriptional regulation. This Mus musculus (Mouse) protein is Trimethylguanosine synthase (Tgs1).